Here is a 247-residue protein sequence, read N- to C-terminus: Uridylate kinase (247 aa).

18–21 (KLSG) is a binding site for ATP. Glycine 60 is a binding site for UMP. The ATP site is built by glycine 61 and arginine 65. Residues aspartate 80 and 141-148 (TGNPFFTT) each bind UMP. Residues threonine 168, tyrosine 174, and aspartate 177 each contribute to the ATP site.

It belongs to the UMP kinase family. Homohexamer.

The protein resides in the cytoplasm. The catalysed reaction is UMP + ATP = UDP + ADP. The protein operates within pyrimidine metabolism; CTP biosynthesis via de novo pathway; UDP from UMP (UMPK route): step 1/1. Inhibited by UTP. In terms of biological role, catalyzes the reversible phosphorylation of UMP to UDP. The chain is Uridylate kinase from Ectopseudomonas mendocina (strain ymp) (Pseudomonas mendocina).